A 336-amino-acid polypeptide reads, in one-letter code: D-alanine--D-alanine ligase (336 aa).

The ATP-grasp domain occupies 124–330 (KMWFSALGVP…FTEYLIDVIG (207 aa)). Residue 154-209 (AFDNWGSVFVKAASQGSSVGCYKVDVKANIANVLKDAFSYAPYVVVEQTIHARELE) coordinates ATP. The Mg(2+) site is built by Asp-284, Glu-297, and Asn-299.

It belongs to the D-alanine--D-alanine ligase family. It depends on Mg(2+) as a cofactor. Requires Mn(2+) as cofactor.

The protein resides in the cytoplasm. The catalysed reaction is 2 D-alanine + ATP = D-alanyl-D-alanine + ADP + phosphate + H(+). Its pathway is cell wall biogenesis; peptidoglycan biosynthesis. Its function is as follows. Cell wall formation. The sequence is that of D-alanine--D-alanine ligase from Shewanella frigidimarina (strain NCIMB 400).